The sequence spans 453 residues: uncharacterized protein (453 aa).

Positions 74, 80, 83, and 162 each coordinate [4Fe-4S] cluster. Glutamine 286, tyrosine 315, glutamate 336, and aspartate 384 together coordinate S-adenosyl-L-methionine. Catalysis depends on cysteine 411, which acts as the Nucleophile.

This sequence belongs to the class I-like SAM-binding methyltransferase superfamily. RNA M5U methyltransferase family.

This is an uncharacterized protein from Staphylococcus aureus (strain Mu50 / ATCC 700699).